A 597-amino-acid polypeptide reads, in one-letter code: MKHIRNFSIIAHIDHGKSTLSDRLIQVCGGLSDREMAAQVLDSMDLERERGITIKSQSVTLNYTAKDGETYQLNFIDTPGHVDFAYEVSRSLAACEGALLVVDAGQGVEAQTLANCYTAIEMDLEVVPILNKIDLPAADPERVAEEIEEIVGIDAMDATRCSAKTGLGVEDVLENIVSAIPAPEGDPDAPLQALIIDSWFDNYLGVVSLVRIKNGSLKKNDKIKVMSTGQAWGVDRLGIFTPKQVDTDVLNTGEVGWVVCGIKDILGAPVGDTLTLAKNGSDKPLPGFKKVKPQVYAGLFPVSSDDYENFRDALGKLSLNDASLFYEPENSAALGFGFRCGFLGMLHMEIIQERLEREYDLDLITTAPTVVYEVEKTDGELLYVDSPAKLPAINDIEEIREPIARCNILVPSDYLGNVITLCVEKRGLQVDMVYHGNQVAVTYDIPMAEVVLDFFDRLKSTSRGYASLDYNFQRFEASNMVRVDVLLNGDKVDALALITHKDQSQTRGRQLVEKMKEFIPRQMFDIAIQAAIGNHIIARSTVKQLRKNVIAKCYGGDVSRKKKLLKKQKEGKKRMKQIGNVELPQEAFLAILHVGKD.

One can recognise a tr-type G domain in the interval 2 to 184 (KHIRNFSIIA…NIVSAIPAPE (183 aa)). Residues 14–19 (DHGKST) and 131–134 (NKID) contribute to the GTP site.

Belongs to the TRAFAC class translation factor GTPase superfamily. Classic translation factor GTPase family. LepA subfamily.

The protein localises to the cell inner membrane. The catalysed reaction is GTP + H2O = GDP + phosphate + H(+). Its function is as follows. Required for accurate and efficient protein synthesis under certain stress conditions. May act as a fidelity factor of the translation reaction, by catalyzing a one-codon backward translocation of tRNAs on improperly translocated ribosomes. Back-translocation proceeds from a post-translocation (POST) complex to a pre-translocation (PRE) complex, thus giving elongation factor G a second chance to translocate the tRNAs correctly. Binds to ribosomes in a GTP-dependent manner. The polypeptide is Elongation factor 4 (Vibrio parahaemolyticus serotype O3:K6 (strain RIMD 2210633)).